A 159-amino-acid polypeptide reads, in one-letter code: ATP synthase subunit b (159 aa).

A helical transmembrane segment spans residues 2–22 (NISIPQIIAAILNFIILLLIV).

The protein belongs to the ATPase B chain family. F-type ATPases have 2 components, F(1) - the catalytic core - and F(0) - the membrane proton channel. F(1) has five subunits: alpha(3), beta(3), gamma(1), delta(1), epsilon(1). F(0) has three main subunits: a(1), b(2) and c(10-14). The alpha and beta chains form an alternating ring which encloses part of the gamma chain. F(1) is attached to F(0) by a central stalk formed by the gamma and epsilon chains, while a peripheral stalk is formed by the delta and b chains.

It is found in the cell membrane. Its function is as follows. F(1)F(0) ATP synthase produces ATP from ADP in the presence of a proton or sodium gradient. F-type ATPases consist of two structural domains, F(1) containing the extramembraneous catalytic core and F(0) containing the membrane proton channel, linked together by a central stalk and a peripheral stalk. During catalysis, ATP synthesis in the catalytic domain of F(1) is coupled via a rotary mechanism of the central stalk subunits to proton translocation. In terms of biological role, component of the F(0) channel, it forms part of the peripheral stalk, linking F(1) to F(0). This is ATP synthase subunit b from Clostridium botulinum (strain Loch Maree / Type A3).